The sequence spans 345 residues: Putative [LysW]-L-2-aminoadipate/[LysW]-L-glutamate phosphate reductase (345 aa).

11–14 (SGFT) serves as a coordination point for NADP(+). Residues 34–56 (TSRSKENKTIGHSHPNLRHSDLR) form a disordered region. The active site involves Cys146. NADP(+) is bound at residue Asn309.

The protein belongs to the NAGSA dehydrogenase family. Type 1 subfamily. LysY sub-subfamily.

Its subcellular location is the cytoplasm. The catalysed reaction is [amino-group carrier protein]-C-terminal-N-(1-carboxy-5-oxopentan-1-yl)-L-glutamine + phosphate + NADP(+) = [amino-group carrier protein]-C-terminal-N-(1-carboxy-5-phosphooxy-5-oxopentan-1-yl)-L-glutamine + NADPH + H(+). The enzyme catalyses [amino-group carrier protein]-C-terminal-gamma-(L-glutamyl-5-semialdehyde)-L-glutamate + phosphate + NADP(+) = [amino-group carrier protein]-C-terminal-gamma-(5-phospho-L-glutamyl)-L-glutamate + NADPH + H(+). It participates in amino-acid biosynthesis; L-lysine biosynthesis via AAA pathway; L-lysine from L-alpha-aminoadipate (Thermus route): step 3/5. It functions in the pathway amino-acid biosynthesis; L-arginine biosynthesis. In terms of biological role, involved in both the arginine and lysine biosynthetic pathways. The chain is Putative [LysW]-L-2-aminoadipate/[LysW]-L-glutamate phosphate reductase from Haloarcula marismortui (strain ATCC 43049 / DSM 3752 / JCM 8966 / VKM B-1809) (Halobacterium marismortui).